The chain runs to 204 residues: Inactive ribonuclease-like protein 9 (204 aa).

The N-terminal stretch at 1–26 (MMRTLITIHPLPLLLLLQQLLQPVQF) is a signal peptide. 3 cysteine pairs are disulfide-bonded: C97/C152, C115/C167, and C122/C129. N-linked (GlcNAc...) asparagine glycans are attached at residues N130 and N142.

Belongs to the pancreatic ribonuclease family.

Its subcellular location is the secreted. Its function is as follows. Does not exhibit any ribonuclease activity. The chain is Inactive ribonuclease-like protein 9 (RNASE9) from Symphalangus syndactylus (Siamang).